Reading from the N-terminus, the 611-residue chain is Probable methyltransferase PMT1 (611 aa).

The Cytoplasmic portion of the chain corresponds to 1–11 (MRGRSEGGKKK). The helical; Signal-anchor for type II membrane protein transmembrane segment at 12-32 (PVIVLLCVASVVLVFVYLFFG) threads the bilayer. Residues 33–611 (SSNHKAIEYG…LTSESLRDLE (579 aa)) are Lumenal-facing. Asparagine 345 carries N-linked (GlcNAc...) asparagine glycosylation.

Belongs to the methyltransferase superfamily.

It localises to the golgi apparatus membrane. This is Probable methyltransferase PMT1 from Arabidopsis thaliana (Mouse-ear cress).